Consider the following 439-residue polypeptide: Dihydroorotase (439 aa).

Zn(2+) contacts are provided by histidine 65 and histidine 67. Residues 67–69 and asparagine 99 each bind substrate; that span reads HFR. Aspartate 156, histidine 183, histidine 246, and aspartate 321 together coordinate Zn(2+). Aspartate 321 is an active-site residue. Residues histidine 325 and 339 to 340 contribute to the substrate site; that span reads FG.

The protein belongs to the metallo-dependent hydrolases superfamily. DHOase family. Class I DHOase subfamily. The cofactor is Zn(2+).

The catalysed reaction is (S)-dihydroorotate + H2O = N-carbamoyl-L-aspartate + H(+). It functions in the pathway pyrimidine metabolism; UMP biosynthesis via de novo pathway; (S)-dihydroorotate from bicarbonate: step 3/3. Catalyzes the reversible cyclization of carbamoyl aspartate to dihydroorotate. The chain is Dihydroorotase from Chlorobaculum tepidum (strain ATCC 49652 / DSM 12025 / NBRC 103806 / TLS) (Chlorobium tepidum).